A 436-amino-acid polypeptide reads, in one-letter code: Mitochondrial distribution and morphology protein 12 (436 aa).

The region spanning 1 to 436 (MSIEVNWGTA…VFPSFYTFLI (436 aa)) is the SMP-LTD domain. Acidic residues predominate over residues 73–84 (DEDGDSGSEISE). 3 disordered regions span residues 73–98 (DEDG…WDRT), 184–275 (AVAG…RMRE), and 352–380 (GSGS…PHQK). Basic and acidic residues predominate over residues 85 to 98 (ELQHRTHDNPWDRT). 2 stretches are compositionally biased toward polar residues: residues 190–206 (PFTT…QGNK) and 222–243 (DSSN…SNRS). Residues 244–255 (SHPDGHPEHNDD) show a composition bias toward basic and acidic residues. Polar residues predominate over residues 256–267 (PISSSENPLLQN).

The protein belongs to the MDM12 family. In terms of assembly, component of the ER-mitochondria encounter structure (ERMES) or MDM complex, composed of mmm1, mdm10, mdm12 and mdm34. A mmm1 homodimer associates with one molecule of mdm12 on each side in a pairwise head-to-tail manner, and the SMP-LTD domains of mmm1 and mdm12 generate a continuous hydrophobic tunnel for phospholipid trafficking.

The protein resides in the mitochondrion outer membrane. It is found in the endoplasmic reticulum membrane. In terms of biological role, component of the ERMES/MDM complex, which serves as a molecular tether to connect the endoplasmic reticulum (ER) and mitochondria. Components of this complex are involved in the control of mitochondrial shape and protein biogenesis, and function in nonvesicular lipid trafficking between the ER and mitochondria. Mdm12 is required for the interaction of the ER-resident membrane protein mmm1 and the outer mitochondrial membrane-resident beta-barrel protein mdm10. The mdm12-mmm1 subcomplex functions in the major beta-barrel assembly pathway that is responsible for biogenesis of all mitochondrial outer membrane beta-barrel proteins, and acts in a late step after the SAM complex. The mdm10-mdm12-mmm1 subcomplex further acts in the TOM40-specific pathway after the action of the mdm12-mmm1 complex. Essential for establishing and maintaining the structure of mitochondria and maintenance of mtDNA nucleoids. The chain is Mitochondrial distribution and morphology protein 12 from Emericella nidulans (strain FGSC A4 / ATCC 38163 / CBS 112.46 / NRRL 194 / M139) (Aspergillus nidulans).